The following is an 855-amino-acid chain: E3 ubiquitin-protein ligase TRIM71 (855 aa).

Position 2 is an N-acetylalanine (Ala-2). An RING-type zinc finger spans residues 12-94 (CLLCKEMCGS…ALKLRCPVCD (83 aa)). The segment covering 26–42 (SSNSSASSSSSQTSTSS) has biased composition (low complexity). Disordered stretches follow at residues 26–48 (SSNSSASSSSSQTSTSSAGGGGP) and 127–177 (EEPP…SPGS). The span at 135-145 (RAGGGPGGAGG) shows a compositional bias: gly residues. Basic residues predominate over residues 147–157 (SNHRHHAHHPA). The B box-type 1; atypical zinc-finger motif lies at 181 to 228 (RRPHGCSSCDEGNAASSRCLDCQEHLCDNCVRAHQRVRLTKDHYIERG). Residues 260-301 (ERLGFCQHHDDEVLHLYCDTCSVPICRECTLGRHGGHSFAYL) form a B box-type 2 zinc finger. Zn(2+)-binding residues include Cys-265, His-268, Cys-288, and His-293. Coiled coils occupy residues 314 to 352 (QLLADAQQGRQALQLSIEQAQTVAEQVEMKAKVVQSEVK) and 378 to 411 (QVKAKSLFLQVEKLRQSLSKLESTISAVQQVLEE). The Filamin repeat unit spans residues 466-567 (SSGAFAPLTK…IENSPFKVVV (102 aa)). 6 NHL repeats span residues 580-623 (GLSF…FKPC), 627-670 (HHKF…FTFE), 674-717 (LLKF…FGPD), 721-764 (LNKY…IHPD), 768-811 (ARFL…FEAN), and 815-855 (LCKF…ILIF).

It belongs to the TRIM/RBCC family. As to quaternary structure, interacts (via NHL repeats) with AGO2; the interaction increases in presence of RNA. Interacts with HSP90AA1. Interacts (via NHL repeats) with MOV10, PABPC1, PUM1, PUM2, STAU2, XRN1 and XRN2 in an RNA-dependent manner. Interacts with SHCBP1; leading to enhance its stability. Autoubiquitinated. Highly expressed in undifferentiated embryonic stem cells (ESCs). Expressed in the epiblast and in interfollicular epidermal stem cells during early development. Also expressed in male germ cells and in the reproductive tract. Highly expressed in neuroepithelial cells, and its expression declines as neurogenesis proceeds (at protein level). Expressed in ependymal cells of the brain.

Its subcellular location is the cytoplasm. It localises to the P-body. It carries out the reaction S-ubiquitinyl-[E2 ubiquitin-conjugating enzyme]-L-cysteine + [acceptor protein]-L-lysine = [E2 ubiquitin-conjugating enzyme]-L-cysteine + N(6)-ubiquitinyl-[acceptor protein]-L-lysine.. Its pathway is protein modification; protein ubiquitination. Functionally, E3 ubiquitin-protein ligase that cooperates with the microRNAs (miRNAs) machinery and promotes embryonic stem cells proliferation and maintenance. Binds to miRNAs and associates with AGO2, participating in post-transcriptional repression of transcripts such as CDKN1A. Facilitates the G1-S transition to promote rapid embryonic stem cell self-renewal by repressing CDKN1A expression. In addition, participates in post-transcriptional mRNA repression in a miRNA independent mechanism. Required to maintain proliferation and prevent premature differentiation of neural progenitor cells during early neural development: positively regulates FGF signaling by controlling the stability of SHCBP1. Specific regulator of miRNA biogenesis. miRNA Binds MIR29A hairpin and postranscriptionally modulates MIR29A levels, which indirectly regulates TET proteins expression. The sequence is that of E3 ubiquitin-protein ligase TRIM71 (Trim71) from Mus musculus (Mouse).